Reading from the N-terminus, the 371-residue chain is Glutamate 5-kinase (371 aa).

Lys10 is a binding site for ATP. 3 residues coordinate substrate: Ser50, Asp137, and Asn149. ATP is bound by residues 169-170 (SD) and 208-214 (TGGMYTK). In terms of domain architecture, PUA spans 274 to 352 (QGKVYIDDGA…EEIKNILGED (79 aa)).

Belongs to the glutamate 5-kinase family.

The protein localises to the cytoplasm. The enzyme catalyses L-glutamate + ATP = L-glutamyl 5-phosphate + ADP. It participates in amino-acid biosynthesis; L-proline biosynthesis; L-glutamate 5-semialdehyde from L-glutamate: step 1/2. Catalyzes the transfer of a phosphate group to glutamate to form L-glutamate 5-phosphate. This Dictyoglomus thermophilum (strain ATCC 35947 / DSM 3960 / H-6-12) protein is Glutamate 5-kinase.